The primary structure comprises 354 residues: Uroporphyrinogen decarboxylase (354 aa).

Substrate-binding positions include 27–31 (RQAGR), aspartate 77, tyrosine 154, threonine 209, and histidine 327.

The protein belongs to the uroporphyrinogen decarboxylase family. Homodimer.

The protein localises to the cytoplasm. It catalyses the reaction uroporphyrinogen III + 4 H(+) = coproporphyrinogen III + 4 CO2. It participates in porphyrin-containing compound metabolism; protoporphyrin-IX biosynthesis; coproporphyrinogen-III from 5-aminolevulinate: step 4/4. Catalyzes the decarboxylation of four acetate groups of uroporphyrinogen-III to yield coproporphyrinogen-III. This is Uroporphyrinogen decarboxylase from Citrobacter koseri (strain ATCC BAA-895 / CDC 4225-83 / SGSC4696).